The primary structure comprises 121 residues: Basic phospholipase A2 daboxin P (121 aa).

7 disulfides stabilise this stretch: C26-C115, C28-C44, C43-C95, C49-C121, C50-C88, C57-C81, and C75-C86. Residues Y27, G29, and G31 each coordinate Ca(2+). H47 is an active-site residue. A Ca(2+)-binding site is contributed by D48. Residue D89 is part of the active site.

Ca(2+) serves as cofactor. As to expression, expressed by the venom gland.

The protein localises to the secreted. The catalysed reaction is a 1,2-diacyl-sn-glycero-3-phosphocholine + H2O = a 1-acyl-sn-glycero-3-phosphocholine + a fatty acid + H(+). Functionally, snake venom phospholipase A2 (PLA2) that exhibits anticoagulant activity, probably by binding to factor X and its activated form factor Xa (F10). Shows no cytotoxicity. PLA2 catalyzes the calcium-dependent hydrolysis of the 2-acyl groups in 3-sn-phosphoglycerides. The polypeptide is Basic phospholipase A2 daboxin P (Daboia russelii (Russel's viper)).